The chain runs to 558 residues: MENEEQESGEILSSEEMMMLDIQPKPLSSLLSFSTLSPSVDENNNCDFDDLNSIFKDFQKQKKNLKDNILKFYNKKKENNDNFFNILKSYITTNNNYNNHFYFIISIYNILYENYKDETPFEYFIEIIYIVSINDHLGPSDRLSSILFFSKYFNKNGNKNQLFNSLLSLIKIENISSTIVNNIIEFLGSILSLSISLGLYNILQLTYDWIIEFANQPTTAITELLNQIINNINNINNNNNNNIKTETESEIESKSESESESESKIETEIEIVTEREIEIEMEIKKENEKQVKVDIFYISIKLLDILINDHLILNESSNNFENLPSNSFDFSSLLTSIIISHYLSPFNKTNSYINDSNKRDNNYIEFTVIPRTLSLLSNYWLRQTPQLLFKFNEKQSKSLNHINLLKEIITISIFSNYINYNNNNNNNNNNNNNNNNNNNNNNNNSGEKNELVEPYIMKLNSVLIDAIYQISECKNDDFSNLIIKNISNTLNPEFFINIITMINNFNFDNKKFVDRISTIIQIYSKTCKRINPNYLNTHIELLKQLNVQTQISITILNQ.

The stretch at 47–78 (DFDDLNSIFKDFQKQKKNLKDNILKFYNKKKE) forms a coiled coil. Disordered regions lie at residues 239-266 (NNNN…SKIE) and 424-447 (NNNN…NSGE). A compositionally biased stretch (basic and acidic residues) spans 245-266 (TETESEIESKSESESESESKIE). Residues 424–444 (NNNNNNNNNNNNNNNNNNNNN) are compositionally biased toward low complexity.

This is an uncharacterized protein from Dictyostelium discoideum (Social amoeba).